We begin with the raw amino-acid sequence, 436 residues long: Trigger factor (436 aa).

A PPIase FKBP-type domain is found at 163–248 (GDRVVLDFAG…VKEVAEGVLP (86 aa)).

Belongs to the FKBP-type PPIase family. Tig subfamily.

It is found in the cytoplasm. It carries out the reaction [protein]-peptidylproline (omega=180) = [protein]-peptidylproline (omega=0). Functionally, involved in protein export. Acts as a chaperone by maintaining the newly synthesized protein in an open conformation. Functions as a peptidyl-prolyl cis-trans isomerase. This chain is Trigger factor, found in Bordetella bronchiseptica (strain ATCC BAA-588 / NCTC 13252 / RB50) (Alcaligenes bronchisepticus).